A 319-amino-acid polypeptide reads, in one-letter code: Taste receptor type 2 member 14 (319 aa).

The Extracellular segment spans residues methionine 1–serine 7. A helical transmembrane segment spans residues isoleucine 8–valine 28. Over leucine 29–arginine 55 the chain is Cytoplasmic. Residues isoleucine 56 to phenylalanine 76 form a helical membrane-spanning segment. Residues alanine 77–asparagine 87 lie on the Extracellular side of the membrane. Positions 86 and 89 each coordinate cholesterol. A helical membrane pass occupies residues isoleucine 88–phenylalanine 108. Topologically, residues leucine 109–valine 129 are cytoplasmic. The chain crosses the membrane as a helical span at residues valine 130–isoleucine 150. Topologically, residues histidine 151–threonine 184 are extracellular. N-linked (GlcNAc...) asparagine glycosylation is found at asparagine 153 and asparagine 162. Residue alanine 180 coordinates cholesterol. The chain crosses the membrane as a helical span at residues valine 185–leucine 205. Residues tryptophan 206–threonine 233 lie on the Cytoplasmic side of the membrane. The helical transmembrane segment at valine 234 to alanine 254 threads the bilayer. Over serine 255 to isoleucine 263 the chain is Extracellular. A helical transmembrane segment spans residues isoleucine 264–leucine 284. Cholesterol contacts are provided by serine 267 and methionine 270. Over glycine 285–serine 319 the chain is Cytoplasmic.

This sequence belongs to the G-protein coupled receptor T2R family. As to quaternary structure, core component of the TAS2R14-GNAI1 complex, consisting of TAS2R14, GNAI1, GNB1 and GNG2; within the complex interacts with GNAI1. Core component of the TAS2R14-GNAT3 complex, consisting of TAS2R14, GNAT3, GNB1 and GNG2; within the complex interacts with GNAT3. Core component of the TAS2R14-GNAS2 complex, consisting of TAS2R14, GNAS2, GNB1 and GNG2; within the complex interacts with GNAS2.

The protein resides in the membrane. The catalysed reaction is Ca(2+)(in) = Ca(2+)(out). The enzyme catalyses 3',5'-cyclic AMP(in) = 3',5'-cyclic AMP(out). Basal activity is enhanced by binding to bitter tastants, such as flufenamic acid and aristolochic acid. Regulated by cholesterol in a concentration-dependent manner. Gustducin-linked G-protein coupled receptor that plays a role in the perception of bitterness. The activity of this receptor stimulates GNAT3, activating the gustducin G-protein pathway. Likely plays a role in sensing the chemical composition of the gastrointestinal content and other extra-oral tissues via the inhibitory G-protein pathways. The polypeptide is Taste receptor type 2 member 14 (TAS2R14) (Macaca mulatta (Rhesus macaque)).